The sequence spans 469 residues: Argininosuccinate lyase (469 aa).

The protein belongs to the lyase 1 family. Argininosuccinate lyase subfamily.

It is found in the cytoplasm. The enzyme catalyses 2-(N(omega)-L-arginino)succinate = fumarate + L-arginine. It functions in the pathway amino-acid biosynthesis; L-arginine biosynthesis; L-arginine from L-ornithine and carbamoyl phosphate: step 3/3. The chain is Argininosuccinate lyase from Paracoccus denitrificans (strain Pd 1222).